The primary structure comprises 370 residues: Platelet-derived growth factor D (370 aa).

The first 23 residues, 1–23, serve as a signal peptide directing secretion; that stretch reads MHRLILVSILVCANFCCYRDTFA. A CUB domain is found at 52–170; the sequence is RDENIRVTGT…PGFKIYYSFV (119 aa). A disulfide bridge links Cys-109 with Cys-131. Asn-276 carries N-linked (GlcNAc...) asparagine glycosylation. 2 disulfides stabilise this stretch: Cys-302/Cys-360 and Cys-306/Cys-362.

The protein belongs to the PDGF/VEGF growth factor family. In terms of assembly, homodimer; disulfide-linked. Interacts with PDGFRB homodimers, and with heterodimers formed by PDGFRA and PDGFRB. In terms of processing, activated by proteolytic cleavage. Proteolytic removal of the N-terminal CUB domain releasing the core domain is necessary for unmasking the receptor-binding epitopes of the core domain. Cleavage after Arg-247 or Arg-249 by urokinase plasminogen activator gives rise to the active form. In terms of tissue distribution, widely expressed. Expressed at high levels in the kidney, adrenal glands, eye and CNS. In the kidney the localization is confined to arterial and arteriolar vascular smooth muscle cells and is also detected at low levels in the glomeruli In the eye in the anterior segment it is localized to the iris and ciliary body. In the retina localizes intensely to the outer plexiform layer, which contains photoreceptor axons and the synaptic layer between photoreceptors and second order neurons. In the spinal cord, prominently expressed in the motorneurons.

The protein resides in the secreted. Its function is as follows. Growth factor that plays an essential role in the regulation of embryonic development, cell proliferation, cell migration, survival and chemotaxis. Potent mitogen for cells of mesenchymal origin. Plays an important role in wound healing. Induces macrophage recruitment, increased interstitial pressure, and blood vessel maturation during angiogenesis. May play an important role in control of lens epithelial cell proliferation. Can initiate events that lead to a mesangial proliferative glomerulonephritis, including influx of monocytes and macrophages and production of extracellular matrix. In Rattus norvegicus (Rat), this protein is Platelet-derived growth factor D (Pdgfd).